The chain runs to 462 residues: uncharacterized protein (462 aa).

WD repeat units lie at residues 170–209 (GGER…EVQL), 212–260 (GHTD…PLLR), 263–302 (GHLA…ELLM), 305–344 (GHSE…SIMV), 347–386 (EHIR…LAHT), 389–430 (AHSS…LIKS), and 433–462 (GHEE…LWYP).

Its subcellular location is the cytoplasm. This is an uncharacterized protein from Schizosaccharomyces pombe (strain 972 / ATCC 24843) (Fission yeast).